A 464-amino-acid chain; its full sequence is Soluble pyridine nucleotide transhydrogenase (464 aa).

35–44 (DSRRQVGGNC) is a binding site for FAD.

It belongs to the class-I pyridine nucleotide-disulfide oxidoreductase family. FAD serves as cofactor.

The protein localises to the cytoplasm. The catalysed reaction is NAD(+) + NADPH = NADH + NADP(+). Its function is as follows. Conversion of NADPH, generated by peripheral catabolic pathways, to NADH, which can enter the respiratory chain for energy generation. This Pseudomonas fluorescens (strain Pf0-1) protein is Soluble pyridine nucleotide transhydrogenase.